A 246-amino-acid chain; its full sequence is tRNA (guanine-N(1)-)-methyltransferase (246 aa).

S-adenosyl-L-methionine contacts are provided by residues glycine 114 and isoleucine 134–leucine 139.

This sequence belongs to the RNA methyltransferase TrmD family. In terms of assembly, homodimer.

It localises to the cytoplasm. The catalysed reaction is guanosine(37) in tRNA + S-adenosyl-L-methionine = N(1)-methylguanosine(37) in tRNA + S-adenosyl-L-homocysteine + H(+). Functionally, specifically methylates guanosine-37 in various tRNAs. In Coxiella burnetii (strain CbuK_Q154) (Coxiella burnetii (strain Q154)), this protein is tRNA (guanine-N(1)-)-methyltransferase.